The sequence spans 58 residues: Small ribosomal subunit protein bS21 (58 aa).

Residues Asp39–Arg58 form a disordered region. Residues Val43–Arg58 are compositionally biased toward basic residues.

Belongs to the bacterial ribosomal protein bS21 family.

This Chlamydia abortus (strain DSM 27085 / S26/3) (Chlamydophila abortus) protein is Small ribosomal subunit protein bS21.